The sequence spans 433 residues: Phosphoribosylamine--glycine ligase (433 aa).

The region spanning 111 to 317 (EFMARNNIKG…FVDICEAIVD (207 aa)) is the ATP-grasp domain. An ATP-binding site is contributed by 138–194 (EDNPDVVVKPAGLTGGKGVKVMGEHMHTLEEAREYVKSVLEHDRVVIEERLKGEEVT). Mg(2+) is bound by residues Gln-275, Glu-287, and Asn-289. Positions 275, 287, and 289 each coordinate Mn(2+).

The protein belongs to the GARS family. The cofactor is Mg(2+). It depends on Mn(2+) as a cofactor.

It catalyses the reaction 5-phospho-beta-D-ribosylamine + glycine + ATP = N(1)-(5-phospho-beta-D-ribosyl)glycinamide + ADP + phosphate + H(+). The protein operates within purine metabolism; IMP biosynthesis via de novo pathway; N(1)-(5-phospho-D-ribosyl)glycinamide from 5-phospho-alpha-D-ribose 1-diphosphate: step 2/2. The sequence is that of Phosphoribosylamine--glycine ligase from Methanocella arvoryzae (strain DSM 22066 / NBRC 105507 / MRE50).